Reading from the N-terminus, the 421-residue chain is FAD-dependent monooxygenase atnJ (421 aa).

A helical membrane pass occupies residues 9 to 29 (LVPLHVVIVGAGIGGLSAAVA). Glu-41 and Ala-54 together coordinate FAD. Arg-188 is a catalytic residue. FAD contacts are provided by Asp-303 and Val-316. The tract at residues 371 to 392 (RDGDAQAARDSQRKATSGTGQN) is disordered.

It belongs to the paxM FAD-dependent monooxygenase family. It depends on FAD as a cofactor.

The protein resides in the membrane. Its pathway is secondary metabolite biosynthesis; terpenoid biosynthesis. Its function is as follows. FAD-dependent monooxygenase; part of the gene cluster that mediates the biosynthesis of the meroterpenoids arthripenoids. The pathway begins with the HR-PKS atnH that catalyzes two chain-extension steps to form a reduced triketide, which then primes the SAT domain in the NR-PKS atnG to initiate three more cycles of extension to give a linear hexaketide corresponding to the polyketide part of arthripenoids. The FAD-dependent monooxygenase atnJ then performs an oxidative decarboxylation at C11 of the atnH/atnG product, via an electrophilic aromatic hydroxylation with concomitant ipso-decarboxylation. The membrane-bound polyprenyl transferase atnF then introduces a farnesyl group before the FAD-dependent monooxygenase atnK functions as the first epoxidase on terminal C12'-C13' olefin, followed by a second epoxidation on C7'-C8' catalyzed by atnA. The terpene cyclase/mutase atnI then initiates the sequential tricyclic ring formation through protonation of the terminal epoxide and catalyzes the regioselective and stereoselective 6/6/6-tricyclic ring formation. The cytochrome P450 monooxygenase atnM is responsible for hydroxylating both C1' and C10'. The next steps may involve ketoreduction and acetyl transfer by the ketoreductase atnB and the acetyltransferase atnC, and lead to the production of arthripenoid B, the final biosynthetic product of the atn cluster. The hydroquinone moiety in arthripenoid B is prone to undergo spontaneous oxidation to afford a benzoquinone compound, a key intermediate for generating structure diversity. For instance, addition of a cysteine followed by ring contraction gives arthripenoid A, tautomerization gives the main product arthripenoid C, addition of a molecular of water or amine affords arthripenoid D or E, respectively, and loss of one water forms arthripenoid F. This chain is FAD-dependent monooxygenase atnJ, found in Arthrinium sp.